Consider the following 331-residue polypeptide: D-alanine--D-alanine ligase (331 aa).

In terms of domain architecture, ATP-grasp spans 116-316; sequence KRQWQTHGLP…YEDFVLQLAA (201 aa). Position 142 to 197 (142 to 197) interacts with ATP; that stretch reads ADRLGLPLIVKPAREGSSIGLTKVTSVAELPAAYEKAARLDRDVMAEQFIEGDELT. Positions 269, 283, and 285 each coordinate Mg(2+).

It belongs to the D-alanine--D-alanine ligase family. Requires Mg(2+) as cofactor. Mn(2+) is required as a cofactor.

Its subcellular location is the cytoplasm. The enzyme catalyses 2 D-alanine + ATP = D-alanyl-D-alanine + ADP + phosphate + H(+). Its pathway is cell wall biogenesis; peptidoglycan biosynthesis. Functionally, cell wall formation. This is D-alanine--D-alanine ligase from Ralstonia pickettii (strain 12J).